Here is a 362-residue protein sequence, read N- to C-terminus: Outer membrane porin F (362 aa).

The signal sequence occupies residues 1–22; sequence MMKRNILAVIVPALLVAGTANA.

Belongs to the Gram-negative porin family. As to quaternary structure, homotrimer. Forms mixed heterotrimers with OmpC; other mixed heterotrimers are also probable.

The protein localises to the cell outer membrane. Forms pores that allow passive diffusion of small molecules across the outer membrane. In terms of biological role, (Microbial infection) Is the major receptor for colicin E5. Its function is as follows. (Microbial infection) A mixed OmpC-OmpF heterotrimer is the outer membrane receptor for toxin CdiA-EC536. The sequence is that of Outer membrane porin F (ompF) from Escherichia coli O6:K15:H31 (strain 536 / UPEC).